The sequence spans 926 residues: Ubiquitin carboxyl-terminal hydrolase 4 (926 aa).

Residues 205–328 (SQMEILLIDI…WLKSNYGSQV (124 aa)) form the Rhodanese domain. Residue Ser-443 is modified to Phosphoserine. The 362-residue stretch at 562–923 (VGLENLGNSC…NAYVLFYHRV (362 aa)) folds into the USP domain. Residue Cys-571 is the Nucleophile of the active site. The active-site Proton acceptor is His-880.

The protein belongs to the peptidase C19 family. In terms of assembly, interacts with BRO1, RFU1 and VPS32. Associates with the 26S proteasome.

Its subcellular location is the cytoplasm. It is found in the late endosome membrane. The catalysed reaction is Thiol-dependent hydrolysis of ester, thioester, amide, peptide and isopeptide bonds formed by the C-terminal Gly of ubiquitin (a 76-residue protein attached to proteins as an intracellular targeting signal).. Its activity is regulated as follows. RFU1 is an inhibitor of deubiquitination activity. In terms of biological role, ubiquitin thioesterase that acts at the late endosome/prevacuolar compartment to recover ubiquitin from ubiquitinated membrane proteins en route to the vacuole. Also removes ubiquitin from soluble proteins targeted to proteasomes. Is essential to maintain a normal level of free ubiquitin. Involved in the ammonium-induced down-regulation of the GAP1 permease and the UME3 destruction in response to oxidative stress. Has a role in the RAD9 checkpoint response to TOP1 poisons. Required for promoting coordination of DNA replication and avoids DNA overreplication. This is Ubiquitin carboxyl-terminal hydrolase 4 (DOA4) from Saccharomyces cerevisiae (strain YJM789) (Baker's yeast).